Consider the following 217-residue polypeptide: Ran-binding protein 1 homolog b (217 aa).

Disordered regions lie at residues 1–32 (MASISNEPERENRDEEETGANEDEDTGAQVAP) and 160–217 (ESEE…VPSA). A2 is modified (N-acetylalanine). Positions 14–26 (DEEETGANEDEDT) are enriched in acidic residues. Positions 29-164 (QVAPIVRLEE…FKEVAESEEE (136 aa)) constitute a RanBD1 domain. Over residues 181 to 217 (LTVEEKESEKKPVEKAEENKKSEAVEEKKTEESVPSA) the composition is skewed to basic and acidic residues.

Interacts with the GTP-bound form of RAN1, RAN2 and RAN3.

It localises to the nucleus. The protein resides in the nuclear pore complex. The sequence is that of Ran-binding protein 1 homolog b (RANBP1B) from Arabidopsis thaliana (Mouse-ear cress).